Reading from the N-terminus, the 258-residue chain is L-aminoadipate-semialdehyde dehydrogenase-phosphopantetheinyl transferase (258 aa).

The protein belongs to the P-Pant transferase superfamily. AcpS family.

The protein resides in the cytoplasm. Its subcellular location is the nucleus. The enzyme catalyses apo-[ACP] + CoA = holo-[ACP] + adenosine 3',5'-bisphosphate + H(+). In terms of biological role, catalyzes the transfer of a 4'-phosphopantetheine moiety from coenzyme A to a serine residue of acceptor proteins, such as alpha-aminoadipate reductase. Necessary for alpha-aminoadipate reductase activity. This is L-aminoadipate-semialdehyde dehydrogenase-phosphopantetheinyl transferase (lys7) from Schizosaccharomyces pombe (strain 972 / ATCC 24843) (Fission yeast).